The chain runs to 148 residues: 3-dehydroquinate dehydratase (148 aa).

Tyr-23 (proton acceptor) is an active-site residue. Residues Asn-74, His-80, and Asp-87 each contribute to the substrate site. The active-site Proton donor is His-100. Substrate contacts are provided by residues 101-102 (IS) and Arg-111.

This sequence belongs to the type-II 3-dehydroquinase family. In terms of assembly, homododecamer.

It catalyses the reaction 3-dehydroquinate = 3-dehydroshikimate + H2O. It functions in the pathway metabolic intermediate biosynthesis; chorismate biosynthesis; chorismate from D-erythrose 4-phosphate and phosphoenolpyruvate: step 3/7. Catalyzes a trans-dehydration via an enolate intermediate. The protein is 3-dehydroquinate dehydratase of Thermoanaerobacter pseudethanolicus (strain ATCC 33223 / 39E) (Clostridium thermohydrosulfuricum).